A 507-amino-acid polypeptide reads, in one-letter code: Lysine--tRNA ligase (507 aa).

Glutamate 416 and glutamate 423 together coordinate Mg(2+).

This sequence belongs to the class-II aminoacyl-tRNA synthetase family. In terms of assembly, homodimer. Mg(2+) serves as cofactor.

It is found in the cytoplasm. The catalysed reaction is tRNA(Lys) + L-lysine + ATP = L-lysyl-tRNA(Lys) + AMP + diphosphate. This chain is Lysine--tRNA ligase, found in Hahella chejuensis (strain KCTC 2396).